A 690-amino-acid polypeptide reads, in one-letter code: UvrABC system protein B (690 aa).

Positions E39–E422 constitute a Helicase ATP-binding domain. G52–T59 contributes to the ATP binding site. A Beta-hairpin motif is present at residues Y105–I128. The 154-residue stretch at Q443–I596 folds into the Helicase C-terminal domain. Residues A640–R675 form the UVR domain.

This sequence belongs to the UvrB family. Forms a heterotetramer with UvrA during the search for lesions. Interacts with UvrC in an incision complex.

The protein localises to the cytoplasm. The UvrABC repair system catalyzes the recognition and processing of DNA lesions. A damage recognition complex composed of 2 UvrA and 2 UvrB subunits scans DNA for abnormalities. Upon binding of the UvrA(2)B(2) complex to a putative damaged site, the DNA wraps around one UvrB monomer. DNA wrap is dependent on ATP binding by UvrB and probably causes local melting of the DNA helix, facilitating insertion of UvrB beta-hairpin between the DNA strands. Then UvrB probes one DNA strand for the presence of a lesion. If a lesion is found the UvrA subunits dissociate and the UvrB-DNA preincision complex is formed. This complex is subsequently bound by UvrC and the second UvrB is released. If no lesion is found, the DNA wraps around the other UvrB subunit that will check the other stand for damage. The sequence is that of UvrABC system protein B from Dechloromonas aromatica (strain RCB).